The primary structure comprises 419 residues: GTPase Obg (419 aa).

In terms of domain architecture, Obg spans 1 to 158; it reads MHFVDEAFNE…FKIKTELKVL (158 aa). The OBG-type G domain occupies 159-324; the sequence is ADIGLLGFPS…LKYKMSSFLQ (166 aa). GTP is bound by residues 165–172, 190–194, 211–214, 278–281, and 305–307; these read GFPSVGKS, FTTIK, DLPG, NKMD, and SLV. Mg(2+) is bound by residues Ser-172 and Thr-192. An OCT domain is found at 342–419; the sequence is TLTDNLKTIS…KICDRLFDFL (78 aa).

This sequence belongs to the TRAFAC class OBG-HflX-like GTPase superfamily. OBG GTPase family. Monomer. Mg(2+) is required as a cofactor.

The protein localises to the cytoplasm. An essential GTPase which binds GTP, GDP and possibly (p)ppGpp with moderate affinity, with high nucleotide exchange rates and a fairly low GTP hydrolysis rate. Plays a role in control of the cell cycle, stress response, ribosome biogenesis and in those bacteria that undergo differentiation, in morphogenesis control. This is GTPase Obg from Aster yellows witches'-broom phytoplasma (strain AYWB).